Consider the following 201-residue polypeptide: Holliday junction branch migration complex subunit RuvA (201 aa).

Positions 1–63 (MYDYIKGTVT…EDNISLFGFQ (63 aa)) are domain I. Positions 64 to 142 (TTEERYLFKK…DVVASEIVYV (79 aa)) are domain II. The interval 143 to 153 (APENDMVAGLS) is flexible linker. A domain III region spans residues 153 to 201 (SPQLEEAVLALEALGYSTRELKKVIPKLSKEEDLTSDAYIKLALQLMTK).

The protein belongs to the RuvA family. Homotetramer. Forms an RuvA(8)-RuvB(12)-Holliday junction (HJ) complex. HJ DNA is sandwiched between 2 RuvA tetramers; dsDNA enters through RuvA and exits via RuvB. An RuvB hexamer assembles on each DNA strand where it exits the tetramer. Each RuvB hexamer is contacted by two RuvA subunits (via domain III) on 2 adjacent RuvB subunits; this complex drives branch migration. In the full resolvosome a probable DNA-RuvA(4)-RuvB(12)-RuvC(2) complex forms which resolves the HJ.

The protein localises to the cytoplasm. In terms of biological role, the RuvA-RuvB-RuvC complex processes Holliday junction (HJ) DNA during genetic recombination and DNA repair, while the RuvA-RuvB complex plays an important role in the rescue of blocked DNA replication forks via replication fork reversal (RFR). RuvA specifically binds to HJ cruciform DNA, conferring on it an open structure. The RuvB hexamer acts as an ATP-dependent pump, pulling dsDNA into and through the RuvAB complex. HJ branch migration allows RuvC to scan DNA until it finds its consensus sequence, where it cleaves and resolves the cruciform DNA. This chain is Holliday junction branch migration complex subunit RuvA, found in Listeria monocytogenes serotype 4b (strain CLIP80459).